The sequence spans 169 residues: Disulfide bond formation protein B 1 (169 aa).

The Cytoplasmic segment spans residues Met-1–Phe-13. A helical transmembrane segment spans residues Trp-14 to Tyr-30. Residues Leu-31–Leu-48 lie on the Periplasmic side of the membrane. A disulfide bridge connects residues Cys-40 and Cys-43. The chain crosses the membrane as a helical span at residues Asp-49 to Pro-64. Residues Arg-65–Gly-71 are Cytoplasmic-facing. A helical membrane pass occupies residues Ile-72 to Trp-89. Topologically, residues Ser-90 to Val-145 are periplasmic. A disulfide bridge connects residues Cys-105 and Cys-131. A helical transmembrane segment spans residues Trp-146–Phe-164. Residues Gly-165 to Ala-169 lie on the Cytoplasmic side of the membrane.

Belongs to the DsbB family.

It is found in the cell inner membrane. Its function is as follows. Required for disulfide bond formation in some periplasmic proteins. Acts by oxidizing the DsbA protein. The polypeptide is Disulfide bond formation protein B 1 (Pseudomonas aeruginosa (strain UCBPP-PA14)).